The primary structure comprises 491 residues: Chromosomal replication initiator protein DnaA (491 aa).

Residues 1 to 69 (MTTWDKCLKK…TIQECHGNDL (69 aa)) are domain I, interacts with DnaA modulators. The segment at 69-154 (LIIEYSNKKF…KEDEEYSFGL (86 aa)) is domain II. The domain III, AAA+ region stretch occupies residues 155-371 (PLKEKYVFDS…GALNRVLTTS (217 aa)). Residues glycine 199, glycine 201, lysine 202, and threonine 203 each coordinate ATP. Residues 372-491 (KFNHKDPTIE…YELLLDKISR (120 aa)) are domain IV, binds dsDNA.

It belongs to the DnaA family. Oligomerizes as a right-handed, spiral filament on DNA at oriC.

It localises to the cytoplasm. In terms of biological role, plays an essential role in the initiation and regulation of chromosomal replication. ATP-DnaA binds to the origin of replication (oriC) to initiate formation of the DNA replication initiation complex once per cell cycle. Binds the DnaA box (a 9 base pair repeat at the origin) and separates the double-stranded (ds)DNA. Forms a right-handed helical filament on oriC DNA; dsDNA binds to the exterior of the filament while single-stranded (ss)DNA is stabiized in the filament's interior. The ATP-DnaA-oriC complex binds and stabilizes one strand of the AT-rich DNA unwinding element (DUE), permitting loading of DNA polymerase. After initiation quickly degrades to an ADP-DnaA complex that is not apt for DNA replication. Binds acidic phospholipids. The polypeptide is Chromosomal replication initiator protein DnaA (Francisella tularensis subsp. novicida (strain U112)).